A 1438-amino-acid polypeptide reads, in one-letter code: DNA polymerase III PolC-type (1438 aa).

Residues 422-578 (YVVFDVETTG…YDTEATAYIF (157 aa)) form the Exonuclease domain.

It belongs to the DNA polymerase type-C family. PolC subfamily.

Its subcellular location is the cytoplasm. The catalysed reaction is DNA(n) + a 2'-deoxyribonucleoside 5'-triphosphate = DNA(n+1) + diphosphate. Its function is as follows. Required for replicative DNA synthesis. This DNA polymerase also exhibits 3' to 5' exonuclease activity. In Staphylococcus aureus (strain Mu3 / ATCC 700698), this protein is DNA polymerase III PolC-type.